The primary structure comprises 923 residues: Probable ribosylation factor GTPase-activating protein cnt6 (923 aa).

Residue Ser-207 is modified to Phosphoserine. Basic and acidic residues predominate over residues 444-455 (TTRRDKGREMHR). The interval 444 to 476 (TTRRDKGREMHRSQVIQTSGRPKSMAPPSPSPI) is disordered. The PH domain maps to 526–632 (KIFKEGLLLV…WIEAICEAAK (107 aa)). An Arf-GAP domain is found at 714–837 (NIFIQMLRKT…AFIDFAGVDA (124 aa)). A C4-type zinc finger spans residues 730-754 (CADCGSVKDVTWCSINIPVVLCIEC).

The protein resides in the cytoplasm. It is found in the cell tip. Functionally, GTPase-activating protein for the ADP ribosylation factor family. The protein is Probable ribosylation factor GTPase-activating protein cnt6 (cnt6) of Schizosaccharomyces pombe (strain 972 / ATCC 24843) (Fission yeast).